The following is a 325-amino-acid chain: MNTVNYLRISLVDRCNFRCSYCMPTGEAIAYLHRSQILSYEELLFLVGEVFLPLGIDRFRLTGGEPLLRRGVVGFVRALVGLPGVADVSLSTNAYLLEELAEDLYAAGLRRVNISLDSLDPGVFARITGRDHWSKVWAGIQAAHRVGFDPLKLNVVVLPGINEQEVPDLAALTIDRQWHVRFIEFMPIGNTGYFEQAGWVNSETLRSRIRERFGLGEGACYGNGPADVFQIPGAKGTVGFISQMSECFCSRCNRVRLAADGFLRPCLLNEADQIDLKTPLRAGAGAAQLRELVSELLLRKPEINFRERDRGTTGSYGRTMSQIGG.

Positions 1–226 (MNTVNYLRIS…EGACYGNGPA (226 aa)) constitute a Radical SAM core domain. GTP is bound at residue Arg-8. [4Fe-4S] cluster is bound by residues Cys-15 and Cys-19. S-adenosyl-L-methionine is bound at residue Tyr-21. Cys-22 is a binding site for [4Fe-4S] cluster. A GTP-binding site is contributed by Arg-60. Gly-64 is a binding site for S-adenosyl-L-methionine. Residue Ser-91 coordinates GTP. Residue Ser-115 participates in S-adenosyl-L-methionine binding. Lys-152 provides a ligand contact to GTP. Met-186 is an S-adenosyl-L-methionine binding site. [4Fe-4S] cluster is bound by residues Cys-249 and Cys-252. 254–256 (RVR) is a binding site for GTP. A [4Fe-4S] cluster-binding site is contributed by Cys-266.

It belongs to the radical SAM superfamily. MoaA family. Monomer and homodimer. It depends on [4Fe-4S] cluster as a cofactor.

The enzyme catalyses GTP + AH2 + S-adenosyl-L-methionine = (8S)-3',8-cyclo-7,8-dihydroguanosine 5'-triphosphate + 5'-deoxyadenosine + L-methionine + A + H(+). Its pathway is cofactor biosynthesis; molybdopterin biosynthesis. In terms of biological role, catalyzes the cyclization of GTP to (8S)-3',8-cyclo-7,8-dihydroguanosine 5'-triphosphate. This Gloeobacter violaceus (strain ATCC 29082 / PCC 7421) protein is GTP 3',8-cyclase.